The chain runs to 730 residues: Catalase-peroxidase (730 aa).

Residues methionine 1–glycine 11 show a composition bias toward basic and acidic residues. The signal sequence occupies residues methionine 1 to alanine 21. The disordered stretch occupies residues methionine 1 to asparagine 24. A cross-link (tryptophyl-tyrosyl-methioninium (Trp-Tyr) (with M-244)) is located at residues tryptophan 96–tyrosine 218. Histidine 97 acts as the Proton acceptor in catalysis. The tryptophyl-tyrosyl-methioninium (Tyr-Met) (with W-96) cross-link spans tyrosine 218 to methionine 244. A heme b-binding site is contributed by histidine 259.

It belongs to the peroxidase family. Peroxidase/catalase subfamily. As to quaternary structure, homodimer or homotetramer. It depends on heme b as a cofactor. Formation of the three residue Trp-Tyr-Met cross-link is important for the catalase, but not the peroxidase activity of the enzyme.

It catalyses the reaction H2O2 + AH2 = A + 2 H2O. The catalysed reaction is 2 H2O2 = O2 + 2 H2O. In terms of biological role, bifunctional enzyme with both catalase and broad-spectrum peroxidase activity. The protein is Catalase-peroxidase of Rhodopseudomonas palustris (strain BisA53).